The following is a 1648-amino-acid chain: MSDDPAFLALGTEVSAKFKGAYCEAKIQKVDRSLKVKVSLKESPFGQMIVQDNDLPNAKFEINELTDVVFQRKFIRCQIQSIKDQSKYHVVFNDGDEKELRRTQLVLKGGKHFAADGNLDSMPLTNPESFSTPVIRGAAKRGAQKIRNAISEASGSRGGAVLLHNDDDENDEEDQEDGENEEDADDDDDDTEEQQQPRERRRAAAISAIGVLKKAIEDTQSEESSADSSEERERARSRRKRKDEASSAVTSDEEDQEDLATTDSENPVINGASSAAALSKTLQRKLEKQAMKREKQRLKEEEREEKLRLKEENREKKRREKARIMELKRLEKVYRTSNARIQENHEKSMTQIISHRSVRYFARFSDLKHRRKKKKLYLHEHRQKVNSRIRNVKLYFAWRFVAHKARLSYFARYALQWWRTSEDQAYSLIRTEKLLRSQRRRDWVGSWLEGLEREKIRFVVIHESYTQARRILKYIERGTEKRTFAERCDIEYEDIESSTVSSHFRDQEWFPAVLFPQVFSDENGSEGRQRIVRHMGNGQLVQVWEDDLVPFDWLPEYSFADVTAMTEKKPVEMRRKFKLAWRFATDYAQNRLDARSIRSILEWKFIRPSSRRLKITPIPVQAPSPNRCGEDHDDLVSTPNESDYDSDATIKNVDAETKDLFVAMLVQFHDAHNSVIDTNPTIQGHEVDLYYLYELAKKTGGPKKVYAANLWSDYAKKLVPAATDAEEELKTIFKNFLESYLAINTKLSWPMESLQPRTERKVVLPGQYSESRKKRTQAIMSQVQTPPTAPGSSKKGRVGSGGTRGRKRKVSSESVQLKKRNRKSSSRATTASPGPSEDRFSFQRPQDSDDVTDVPDDMTDHEDLLPEAATRKKYERKSQTPGRRSLSSRRDDTTPVSSMAAAPPKKGRPRKNTTVTTPVLSVPKSEGRGPRKEDTTTKFVRANVLSHILSGQKLRAFYGDEWFRANAIEDATDCTDEIMDIMLAHQDFFTPDTPRLSPSAIQDLDKVLKKIRAKTHYTGWNQRYDEFMKLEKLMVTVEDQMIARGRFRHLPRGRELKAETLALVEKHFRADDEDDGVPKTLAFYLKIAQEALSLSEKRAVADDDESSDSDTDFEQKPDTSAAAAVNGGKSESEEEEEEKTVVMGGDEEAEEEVKSEDVLVESVDQESPPTTSQGTTTPETAATGGLESESDEPEYPPVPEELVPPPPVLLENFPSTDRFSSGGSSNYPTLSRQGSINSMASPMFSPNSDLSLSGPLTLPRSGPLTMANIRQSPTPDEVVGSLRKRLSQTSESSESSELPPPPSAASKSKRIRRASERSIDSASEHHRMMRSPRILTTQHSSGALIFDISTTQPTDTSGPIEALSVRKPGRRKTVFAASPTLLTSGPLTLSSSAPPPPPASPAPPQHAQKTLGRPRKTPSTSSRKPEEEDEAEQIPTTVVGVTEEASVADSSAKEDLTSEDGSATPQDEKDDSESTTTTDTITPKSIRGGKRRRGGGRFGGSYPVKPAKPGRKPKDPHAEEGADEKDPEDQTPTTMTTSTPTRADSFQTQKNRMAKLMEGKPHDYSFLDLPDFDKIIEEAPKEDINILMEERTYELREIFAQCKADLSALEKRYRQQNEAKRKAEFAAKTASSAAAAQASSSTCSTPRP.

Disordered regions lie at residues 150-270 (ISEA…PVIN) and 284-307 (RKLE…EEKL). Acidic residues-rich tracts occupy residues 166-193 (DDDE…DTEE), 219-228 (TQSEESSADS), and 251-260 (SDEEDQEDLA). Positions 261–270 (TTDSENPVIN) are enriched in polar residues. The ARID domain occupies 655–745 (AETKDLFVAM…FLESYLAINT (91 aa)). Disordered regions lie at residues 763–935 (VLPG…KEDT), 1095–1563 (SEKR…KPHD), and 1628–1648 (KTAS…TPRP). A compositionally biased stretch (acidic residues) spans 848-860 (SDDVTDVPDDMTD). Composition is skewed to basic and acidic residues over residues 861 to 878 (HEDL…ERKS) and 925 to 935 (SEGRGPRKEDT). 2 stretches are compositionally biased toward acidic residues: residues 1102-1112 (DDDESSDSDTD) and 1145-1154 (GDEEAEEEVK). Residues 1165–1185 (QESPPTTSQGTTTPETAATGG) show a composition bias toward low complexity. Over residues 1195–1208 (YPPVPEELVPPPPV) the composition is skewed to pro residues. Residues 1213 to 1251 (FPSTDRFSSGGSSNYPTLSRQGSINSMASPMFSPNSDLS) are compositionally biased toward polar residues. Residues 1313 to 1326 (RASERSIDSASEHH) show a composition bias toward basic and acidic residues. A compositionally biased stretch (polar residues) spans 1348–1357 (ISTTQPTDTS). Residues 1377-1392 (ASPTLLTSGPLTLSSS) are compositionally biased toward low complexity. Residues 1393-1404 (APPPPPASPAPP) show a composition bias toward pro residues. 2 stretches are compositionally biased toward low complexity: residues 1474–1486 (STTT…PKSI) and 1531–1541 (TPTTMTTSTPT). Positions 1542–1551 (RADSFQTQKN) are enriched in polar residues.

It localises to the nucleus. Its function is as follows. DNA-binding protein which modulates activity of several transcription factors. Plays a role in the modulation of endoplasmic reticulum (ER) homeostasis during chemical and pathogen stress, including exposure to the Gram-negative bacterium P.aeruginosa. This chain is AT-rich interactive domain-containing protein arid-1, found in Caenorhabditis elegans.